Consider the following 80-residue polypeptide: Acyl carrier protein (80 aa).

Positions 4–79 (EAILEKVRSI…DAVKYIEDKQ (76 aa)) constitute a Carrier domain. Position 39 is an O-(pantetheine 4'-phosphoryl)serine (serine 39).

Belongs to the acyl carrier protein (ACP) family. Post-translationally, 4'-phosphopantetheine is transferred from CoA to a specific serine of apo-ACP by AcpS. This modification is essential for activity because fatty acids are bound in thioester linkage to the sulfhydryl of the prosthetic group.

Its subcellular location is the cytoplasm. Its pathway is lipid metabolism; fatty acid biosynthesis. In terms of biological role, carrier of the growing fatty acid chain in fatty acid biosynthesis. The chain is Acyl carrier protein from Prochlorococcus marinus (strain SARG / CCMP1375 / SS120).